The following is a 381-amino-acid chain: Pre-mRNA-splicing factor cwf28 (381 aa).

The segment at 1–21 is disordered; it reads MKRKAVLEAFSDSEDEDEKKL. Phosphoserine is present on residues Ser-11 and Ser-13. The stretch at 104–157 forms a coiled coil; that stretch reads AADNEIVDWKANNSNEKAQNKIATNKESTDILPEEVQLVLNDLNDDVKSANSAN. Positions 262 to 381 are disordered; sequence LNSQNEHTEV…DRSYRSTRTL (120 aa). The segment covering 274-285 has biased composition (polar residues); sequence KSNSIDNLTPSS. Phosphoserine occurs at positions 275 and 277. Composition is skewed to basic and acidic residues over residues 287-297, 306-332, and 362-375; these read LFRKRSRDNNL, KHLDYNSRNYNKRDRDPDRTKYREYHS, and SDRYTERENPDRSY.

It belongs to the SPP2 family. Belongs to the 40S cdc5-associated complex (or cwf complex), a spliceosome sub-complex reminiscent of a late-stage spliceosome composed of the U2, U5 and U6 snRNAs and at least brr2, cdc5, cwf2/prp3, cwf3/syf1, cwf4/syf3, cwf5/ecm2, spp42/cwf6, cwf7/spf27, cwf8, cwf9, cwf10, cwf11, cwf12, prp45/cwf13, cwf14, cwf15, cwf16, cwf17, cwf18, cwf19, cwf20, cwf21, cwf22, cwf23, cwf24, cwf25, cwf26, cyp7/cwf27, cwf28, cwf29/ist3, lea1, msl1, prp5/cwf1, prp10, prp12/sap130, prp17, prp22, sap61, sap62, sap114, sap145, slu7, smb1, smd1, smd3, smf1, smg1 and syf2.

The protein resides in the nucleus. In terms of biological role, involved in spliceosome maturation and the first step of pre-mRNA splicing. The chain is Pre-mRNA-splicing factor cwf28 (cwf28) from Schizosaccharomyces pombe (strain 972 / ATCC 24843) (Fission yeast).